The sequence spans 938 residues: Protein zds1 (938 aa).

Positions 1–13 are enriched in polar residues; the sequence is MSSSSVSNTLSIE. Disordered stretches follow at residues 1 to 140, 326 to 386, and 424 to 807; these read MSSS…LDKE, HRGK…VENQ, and SENK…EPKT. A compositionally biased stretch (low complexity) spans 40-54; that stretch reads LSGSSSEPLENNSSL. Residues 57-67 show a composition bias toward basic and acidic residues; that stretch reads STDDPSVEIRS. The segment covering 77–86 has biased composition (polar residues); it reads NLLSDQNITI. Residues 116 to 126 are compositionally biased toward low complexity; it reads SDAQSSVPSFS. Basic and acidic residues predominate over residues 127 to 140; that stretch reads EIHDGMSEEELDKE. Polar residues-rich tracts occupy residues 330–349 and 370–380; these read TSTL…TDTS and TSALSNSQNPS. A compositionally biased stretch (low complexity) spans 429-440; the sequence is ESAVASESSLSE. Basic and acidic residues-rich tracts occupy residues 467–485 and 512–556; these read NKAE…DKSE and NKAE…KADD. The span at 558–567 shows a compositional bias: polar residues; the sequence is LPSNNKTEGY. Positions 587-596 are enriched in pro residues; the sequence is VIPPRVPTPV. Basic and acidic residues predominate over residues 622-635; that stretch reads SSKKPEIFHERHIP. The segment covering 642 to 669 has biased composition (polar residues); sequence NKPSKNNILKSTQVPVTPKQKSSTANKG. Over residues 702–711 the composition is skewed to basic residues; the sequence is KEHKKDKQKK. Positions 715-725 are enriched in low complexity; sequence QISSSSKSASS. The span at 798–807 shows a compositional bias: basic and acidic residues; the sequence is SDEKSTEPKT.

The protein localises to the cytoplasm. Has a role in establishing cell polarity. Also required for maintenance of cell wall integrity, sexual differentiation, calcium tolerance and cell morphology. Involved in Ras-MAPK signaling pathway at cell cortex. Has a role in meiosis. The chain is Protein zds1 (zds1) from Schizosaccharomyces pombe (strain 972 / ATCC 24843) (Fission yeast).